The chain runs to 1146 residues: Activator of SKN7 protein 10 (1146 aa).

The span at 1 to 15 (MSDYFSSRPSQTLTP) shows a compositional bias: polar residues. Disordered regions lie at residues 1–32 (MSDY…ASSI) and 171–194 (ITDP…KVGL). Residue serine 344 is modified to Phosphoserine. The PH domain occupies 482–606 (CIKAGYFLKK…DCTLKDASST (125 aa)). The interval 553 to 575 (NNHHRQASDVHNSSTTTGGTAGA) is disordered. Positions 564–575 (NSSTTTGGTAGA) are enriched in low complexity. Serine 793 bears the Phosphoserine mark. Threonine 808 bears the Phosphothreonine mark. Disordered stretches follow at residues 835–854 (MATS…PQSM) and 909–982 (PVNS…TAMR). Residues 912–924 (SPGSSNSESSSGG) show a composition bias toward low complexity. The segment covering 939-950 (YTQRNSEGSSPC) has biased composition (polar residues). Serine 944 bears the Phosphoserine mark. Residues 958 to 968 (QQQQPLQMQPL) are compositionally biased toward low complexity. Residue serine 969 is modified to Phosphoserine. The segment covering 969 to 982 (SRTSSSSVNVTAMR) has biased composition (polar residues). Phosphothreonine is present on threonine 1017. Residues serine 1070, serine 1095, and serine 1098 each carry the phosphoserine modification. A disordered region spans residues 1124–1146 (GIQEDDGDSTNNDTIKLNQSIYS). Residues 1132–1146 (STNNDTIKLNQSIYS) are compositionally biased toward polar residues.

Belongs to the RGC1 family. Component of the RNA polymerase II holoenzyme. Interacts with RPO21 and SSN8. Phosphorylated in response to various stresses. stress-induced phosphorylation is partially dependent on HOG1.

It localises to the cytoplasm. Its function is as follows. Positive regulator of FPS1 glycerol channel required for the glycerol efflux. As a component of the RNA polymerase II holoenzyme, is required for SSN8 destruction in response to oxidative stress but not heat shock. Required for cell survival in response to heat shock independent of SSN8. The polypeptide is Activator of SKN7 protein 10 (ASK10) (Saccharomyces cerevisiae (strain ATCC 204508 / S288c) (Baker's yeast)).